We begin with the raw amino-acid sequence, 992 residues long: UPF0182 protein MT3285 (992 aa).

A run of 7 helical transmembrane segments spans residues 17 to 39 (RILIMIALGVIVLLLAGPRLIDA), 59 to 81 (LATRIVVCLVAGVVVGGIVFGGL), 113 to 135 (LVGIGIPAAIGLLAGIVAQSYWA), 169 to 191 (LMLSYMLVSVFLAFVANLVAHYI), 212 to 229 (LVSLVGVLVLLKAVAYWL), 255 to 277 (VLPAKLILMAIALICAAAVFSAI), and 284 to 306 (IPAIGLVLLLLSSLIVGAGWPLI). The disordered stretch occupies residues 906-938 (PTEAAVPPSPAANPPPPASGPQPPPVTAAPPVP). The span at 912–938 (PPSPAANPPPPASGPQPPPVTAAPPVP) shows a compositional bias: pro residues.

This sequence belongs to the UPF0182 family.

It is found in the cell membrane. The protein is UPF0182 protein MT3285 of Mycobacterium tuberculosis (strain CDC 1551 / Oshkosh).